A 164-amino-acid chain; its full sequence is Large ribosomal subunit protein uL10 (164 aa).

It belongs to the universal ribosomal protein uL10 family. Part of the ribosomal stalk of the 50S ribosomal subunit. The N-terminus interacts with L11 and the large rRNA to form the base of the stalk. The C-terminus forms an elongated spine to which L12 dimers bind in a sequential fashion forming a multimeric L10(L12)X complex.

Functionally, forms part of the ribosomal stalk, playing a central role in the interaction of the ribosome with GTP-bound translation factors. In Aliivibrio salmonicida (strain LFI1238) (Vibrio salmonicida (strain LFI1238)), this protein is Large ribosomal subunit protein uL10.